Reading from the N-terminus, the 149-residue chain is Large ribosomal subunit protein uL15 (149 aa).

The segment covering 1-29 (MVSHLKKTRKLRGHVSHGHGRVGKHRKGG) has biased composition (basic residues). The tract at residues 1–38 (MVSHLKKTRKLRGHVSHGHGRVGKHRKGGCRGGRGKAG) is disordered.

The protein belongs to the universal ribosomal protein uL15 family.

This Tetrahymena thermophila protein is Large ribosomal subunit protein uL15 (RPL27A).